The chain runs to 497 residues: Peptidoglycan endopeptidase RipA (497 aa).

Positions M1–A39 are cleaved as a signal peptide. Residues A177–E192 show a composition bias toward basic and acidic residues. 2 disordered regions span residues A177–A198 and A253–W297. Residues A255–Q273 are compositionally biased toward pro residues. The NlpC/P60 domain maps to R365–Y497. The active-site Nucleophile is C408. The active-site Proton acceptor is H457. The active site involves E469.

It belongs to the peptidase C40 family. As to quaternary structure, monomer.

The protein localises to the secreted. In terms of biological role, peptidoglycan endopeptidase that cleaves the bond between D-glutamate and meso-diaminopimelate. Binds and degrades high-molecular weight peptidoglycan. Required for normal separation of daughter cells after cell division and for cell wall integrity. In Mycolicibacterium smegmatis (strain ATCC 700084 / mc(2)155) (Mycobacterium smegmatis), this protein is Peptidoglycan endopeptidase RipA (ripA).